The sequence spans 98 residues: mRNA interferase toxin MqsR (98 aa).

Might be a dimer. Also reported to be a monomer. Crystallizes as a heterotetramer with MqsA, MqsR-MqsA(2)-MqsR. Purifies as a possible heterohexamer of 2 MqsR dimers and 1 MqsA dimer. When the 2 dissociate the MsqR mRNA interferase becomes active.

Functionally, toxic component of a type II toxin-antitoxin (TA) system. Plays a significant role in the control of biofilm formation and induction of persister cells in the presence of antibiotics. An mRNA interferase which has been reported to be translation-independent. It has also been reported to be translation-dependent. Cleavage has been reported to occur on either side of G in the sequence GCU. Also reported to cleave after C in GC(A/U) sequences. There are only 14 genes in E.coli W3110 (and probably also MG1655) that do not have a GCU sequence and thus are resistant to the mRNA interferase activity; among these is the gene for toxin GhoT. Overexpression of MqsR causes cessation of cell growth and inhibits cell proliferation via inhibition of translation as well as increasing persister cell formation; these effects are overcome by concomitant or subsequent expression of antitoxin MqsA. Cross-talk can occur between different TA systems. Ectopic expression of this toxin induces transcription of the relBEF TA system operon with specific cleavage of the relBEF mRNA produced. Regulates the expression of GhoT/GhoS, a type V TA system. Persistence depends on toxin GhoT activity, which MqsR controls at the post-transcriptional level by selectively degrading the antitoxin ghoS segment of the ghoST mRNA. Overexpression leads to a dramatic increase in tolerance to the antibiotic ofloxacin. This TA system mediates cell growth during bile acid deoxycholate stress by degrading mRNA for probable deoxycholate-binding protein YgiS; bile acid detergents such as deoxycholate are important for host defense against bacterial growth in the gall bladder and duodenum. Initially reported to act as a cotranscription factor with MqsA. Following further experiments, the MqsR-MqsA complex does not bind DNA and all reported data are actually due to a small fraction of free MqsA alone binding DNA. Addition of MqsR to a preformed MqsA-promoter DNA complex causes dissociation of the MqsA-DNA complex, probably causing derepression of MqsA-repressed transcripts. Does not bind DNA in the presence or absence of MqsA. The polypeptide is mRNA interferase toxin MqsR (Escherichia coli (strain K12)).